Consider the following 292-residue polypeptide: Protease HtpX (292 aa).

The next 2 helical transmembrane spans lie at 5–25 (VVLF…VMSV) and 35–55 (GLLV…LLLS). Histidine 140 serves as a coordination point for Zn(2+). Glutamate 141 is a catalytic residue. Histidine 144 is a Zn(2+) binding site. 2 helical membrane-spanning segments follow: residues 155-175 (LLQG…GGII) and 193-213 (IIVF…AMWF). Glutamate 218 contacts Zn(2+).

It belongs to the peptidase M48B family. Requires Zn(2+) as cofactor.

It localises to the cell inner membrane. The sequence is that of Protease HtpX from Xanthomonas campestris pv. campestris (strain 8004).